Reading from the N-terminus, the 122-residue chain is Nitrogen fixation nifHD region GlnB-like protein 2 (122 aa).

The protein belongs to the P(II) protein family.

Functionally, could be involved in the regulation of nitrogen fixation. The protein is Nitrogen fixation nifHD region GlnB-like protein 2 (glnBB) of Methanobacterium ivanovii.